The following is a 358-amino-acid chain: UDP-N-acetylglucosamine--N-acetylmuramyl-(pentapeptide) pyrophosphoryl-undecaprenol N-acetylglucosamine transferase (358 aa).

Residues R166, S196, and Q291 each contribute to the UDP-N-acetyl-alpha-D-glucosamine site.

The protein belongs to the glycosyltransferase 28 family. MurG subfamily.

Its subcellular location is the cell membrane. It catalyses the reaction Mur2Ac(oyl-L-Ala-gamma-D-Glu-L-Lys-D-Ala-D-Ala)-di-trans,octa-cis-undecaprenyl diphosphate + UDP-N-acetyl-alpha-D-glucosamine = beta-D-GlcNAc-(1-&gt;4)-Mur2Ac(oyl-L-Ala-gamma-D-Glu-L-Lys-D-Ala-D-Ala)-di-trans,octa-cis-undecaprenyl diphosphate + UDP + H(+). It participates in cell wall biogenesis; peptidoglycan biosynthesis. Its function is as follows. Cell wall formation. Catalyzes the transfer of a GlcNAc subunit on undecaprenyl-pyrophosphoryl-MurNAc-pentapeptide (lipid intermediate I) to form undecaprenyl-pyrophosphoryl-MurNAc-(pentapeptide)GlcNAc (lipid intermediate II). The polypeptide is UDP-N-acetylglucosamine--N-acetylmuramyl-(pentapeptide) pyrophosphoryl-undecaprenol N-acetylglucosamine transferase (Staphylococcus saprophyticus subsp. saprophyticus (strain ATCC 15305 / DSM 20229 / NCIMB 8711 / NCTC 7292 / S-41)).